A 266-amino-acid polypeptide reads, in one-letter code: MATVPEPINEVMAYYSDENELLFEADGPKQMKSCTQHLDLGSMGDGNIQLQISHQLYNKSFRQVVSVIVAMEKLRSRAYEHVFRDDDLRSILSFIFEEEPVIFETSSDELLCDAAVQSVKCKLQDREQKSLVLDSPCVLKALHLLSQEMSREVVFCMSFVQGEERDNKIPVALGIRDKNLYLSWVKKGDTPTLQLEEVDPKVYPKRNMEKRFVFYKTEIKNTVEFESVLYPNWYISTSQIEEKPVFLGHFRGGQDITDFRMETLSP.

The propeptide occupies 1 to 113; it reads MATVPEPINE…ETSSDELLCD (113 aa).

It belongs to the IL-1 family. As to quaternary structure, monomer. In its precursor form, weakly interacts with full-length MEFV; the mature cytokine does not interact at all. Interacts with integrins ITGAV:ITGBV and ITGA5:ITGB1; integrin-binding is required for IL1B signaling. Interacts with cargo receptor TMED10; the interaction is direct and is required for the secretion of IL1B mature form. Interacts with HSP90AB1; the interaction facilitates cargo translocation into the ERGIC. Interacts with HSP90B1; the interaction facilitates cargo translocation into the ERGIC.

Its subcellular location is the cytoplasm. The protein localises to the cytosol. It is found in the secreted. The protein resides in the lysosome. It localises to the extracellular exosome. Functionally, potent pro-inflammatory cytokine. Initially discovered as the major endogenous pyrogen, induces prostaglandin synthesis, neutrophil influx and activation, T-cell activation and cytokine production, B-cell activation and antibody production, and fibroblast proliferation and collagen production. Promotes Th17 differentiation of T-cells. Synergizes with IL12/interleukin-12 to induce IFNG synthesis from T-helper 1 (Th1) cells. Plays a role in angiogenesis by inducing VEGF production synergistically with TNF and IL6. Involved in transduction of inflammation downstream of pyroptosis: its mature form is specifically released in the extracellular milieu by passing through the gasdermin-D (GSDMD) pore. In Capra hircus (Goat), this protein is Interleukin-1 beta (IL1B).